A 147-amino-acid polypeptide reads, in one-letter code: Ribosomal RNA large subunit methyltransferase H (147 aa).

Residues Leu-66, Gly-95, and 114 to 119 (LSELTF) contribute to the S-adenosyl-L-methionine site.

Belongs to the RNA methyltransferase RlmH family. In terms of assembly, homodimer.

The protein resides in the cytoplasm. It catalyses the reaction pseudouridine(1915) in 23S rRNA + S-adenosyl-L-methionine = N(3)-methylpseudouridine(1915) in 23S rRNA + S-adenosyl-L-homocysteine + H(+). Functionally, specifically methylates the pseudouridine at position 1915 (m3Psi1915) in 23S rRNA. In Synechococcus sp. (strain RCC307), this protein is Ribosomal RNA large subunit methyltransferase H.